Consider the following 116-residue polypeptide: Spermadhesin Z13 (116 aa).

Disulfide bonds link Cys-14–Cys-35 and Cys-58–Cys-79. Positions 14–115 (CGDLYGEEYG…PDFFLIFRRV (102 aa)) constitute a CUB domain.

Belongs to the spermadhesin family. As to quaternary structure, homodimer; disulfide-linked. As to expression, seminal plasma.

Its subcellular location is the secreted. May be involved in the fertilization process. This is Spermadhesin Z13 from Bos taurus (Bovine).